A 74-amino-acid polypeptide reads, in one-letter code: uncharacterized protein (74 aa).

This is an uncharacterized protein from Schizosaccharomyces pombe (strain 972 / ATCC 24843) (Fission yeast).